Reading from the N-terminus, the 106-residue chain is Large ribosomal subunit protein bL21 (106 aa).

It belongs to the bacterial ribosomal protein bL21 family. As to quaternary structure, part of the 50S ribosomal subunit. Contacts protein L20.

In terms of biological role, this protein binds to 23S rRNA in the presence of protein L20. This is Large ribosomal subunit protein bL21 from Chlamydia abortus (strain DSM 27085 / S26/3) (Chlamydophila abortus).